A 316-amino-acid polypeptide reads, in one-letter code: Ribosomal RNA small subunit methyltransferase H (316 aa).

Residues 35–37, Asp-55, Phe-79, Asp-101, and Gln-108 contribute to the S-adenosyl-L-methionine site; that span reads GGH.

Belongs to the methyltransferase superfamily. RsmH family.

The protein localises to the cytoplasm. The enzyme catalyses cytidine(1402) in 16S rRNA + S-adenosyl-L-methionine = N(4)-methylcytidine(1402) in 16S rRNA + S-adenosyl-L-homocysteine + H(+). Functionally, specifically methylates the N4 position of cytidine in position 1402 (C1402) of 16S rRNA. The polypeptide is Ribosomal RNA small subunit methyltransferase H (Vibrio campbellii (strain ATCC BAA-1116)).